We begin with the raw amino-acid sequence, 1042 residues long: Signal-induced proliferation-associated protein 1 (1042 aa).

2 disordered regions span residues 1–87 (MPMW…TSTR) and 132–153 (SQGM…EDQA). Position 64 is a phosphothreonine (Thr64). Residue Ser67 is modified to Phosphoserine. A compositionally biased stretch (polar residues) spans 134-146 (GMGSHSEASSGTL). A phosphoserine mark is found at Ser182, Ser304, and Ser314. The 219-residue stretch at 321-539 (LLTLDEQVLS…RTRQQYLQDL (219 aa)) folds into the Rap-GAP domain. Residues 687-763 (ELALPRDGQG…VCVTVLPPDE (77 aa)) form the PDZ domain. Phosphoserine occurs at positions 817, 839, and 912. Residues 830-903 (EFLHSQNSLS…PAPELRASFL (74 aa)) are disordered. Low complexity predominate over residues 832–845 (LHSQNSLSPRSSLS). Residues 946 to 980 (LSREGQPIPESGDPKGTPKSDAEPEPGNLSEKVSH) are disordered. Over residues 957-967 (GDPKGTPKSDA) the composition is skewed to basic and acidic residues. Residues 972–1034 (GNLSEKVSHL…TRLLLASKQL (63 aa)) adopt a coiled-coil conformation.

As to quaternary structure, interacts with RRP1B; the interaction leads to inhibition of SIPA1 GTPase activity. In terms of tissue distribution, expressed in fetal as well as in adult tissues. Expressed abundantly in the lymphoid tissues such as thymus, spleen and peripheral blood lymphocytes and also shows a significant expression in the spinal cord.

The protein localises to the nucleus. It is found in the cytoplasm. The protein resides in the perinuclear region. It localises to the endomembrane system. Functionally, GTPase activator for the nuclear Ras-related regulatory proteins Rap1 and Rap2 in vitro, converting them to the putatively inactive GDP-bound state. Affects cell cycle progression. The chain is Signal-induced proliferation-associated protein 1 (SIPA1) from Homo sapiens (Human).